The sequence spans 571 residues: Sulfite reductase [NADPH] hemoprotein beta-component (571 aa).

[4Fe-4S] cluster contacts are provided by Cys-436, Cys-442, Cys-481, and Cys-485. Cys-485 provides a ligand contact to siroheme.

It belongs to the nitrite and sulfite reductase 4Fe-4S domain family. As to quaternary structure, alpha(8)-beta(8). The alpha component is a flavoprotein, the beta component is a hemoprotein. Siroheme serves as cofactor. Requires [4Fe-4S] cluster as cofactor.

The enzyme catalyses hydrogen sulfide + 3 NADP(+) + 3 H2O = sulfite + 3 NADPH + 4 H(+). The protein operates within sulfur metabolism; hydrogen sulfide biosynthesis; hydrogen sulfide from sulfite (NADPH route): step 1/1. In terms of biological role, component of the sulfite reductase complex that catalyzes the 6-electron reduction of sulfite to sulfide. This is one of several activities required for the biosynthesis of L-cysteine from sulfate. This is Sulfite reductase [NADPH] hemoprotein beta-component (cysI) from Bacillus subtilis (strain 168).